We begin with the raw amino-acid sequence, 132 residues long: Small ribosomal subunit protein uS11 (132 aa).

Belongs to the universal ribosomal protein uS11 family. In terms of assembly, part of the 30S ribosomal subunit. Interacts with proteins S7 and S18. Binds to IF-3.

Its function is as follows. Located on the platform of the 30S subunit, it bridges several disparate RNA helices of the 16S rRNA. Forms part of the Shine-Dalgarno cleft in the 70S ribosome. The polypeptide is Small ribosomal subunit protein uS11 (Leifsonia xyli subsp. xyli (strain CTCB07)).